The chain runs to 678 residues: DNA ligase (678 aa).

Residues 35 to 39, 84 to 85, and Glu115 each bind NAD(+); these read DEEYD and SL. Lys117 acts as the N6-AMP-lysine intermediate in catalysis. The NAD(+) site is built by Arg138, Glu172, Lys288, and Lys312. Cys406, Cys409, Cys425, and Cys430 together coordinate Zn(2+). The BRCT domain maps to 589 to 678; that stretch reads VQSKILSNLT…IKNLRQQKLF (90 aa).

This sequence belongs to the NAD-dependent DNA ligase family. LigA subfamily. Mg(2+) serves as cofactor. Mn(2+) is required as a cofactor.

The enzyme catalyses NAD(+) + (deoxyribonucleotide)n-3'-hydroxyl + 5'-phospho-(deoxyribonucleotide)m = (deoxyribonucleotide)n+m + AMP + beta-nicotinamide D-nucleotide.. In terms of biological role, DNA ligase that catalyzes the formation of phosphodiester linkages between 5'-phosphoryl and 3'-hydroxyl groups in double-stranded DNA using NAD as a coenzyme and as the energy source for the reaction. It is essential for DNA replication and repair of damaged DNA. In Pseudothermotoga lettingae (strain ATCC BAA-301 / DSM 14385 / NBRC 107922 / TMO) (Thermotoga lettingae), this protein is DNA ligase.